We begin with the raw amino-acid sequence, 476 residues long: Eukaryotic translation initiation factor 3 subunit L (476 aa).

Residues 257–452 (DAIRMFSHIL…DLDYALENDL (196 aa)) enclose the PCI domain.

It belongs to the eIF-3 subunit L family. Component of the eukaryotic translation initiation factor 3 (eIF-3) complex.

It localises to the cytoplasm. Component of the eukaryotic translation initiation factor 3 (eIF-3) complex, which is involved in protein synthesis of a specialized repertoire of mRNAs and, together with other initiation factors, stimulates binding of mRNA and methionyl-tRNAi to the 40S ribosome. The eIF-3 complex specifically targets and initiates translation of a subset of mRNAs involved in cell proliferation. In Neosartorya fischeri (strain ATCC 1020 / DSM 3700 / CBS 544.65 / FGSC A1164 / JCM 1740 / NRRL 181 / WB 181) (Aspergillus fischerianus), this protein is Eukaryotic translation initiation factor 3 subunit L.